The sequence spans 186 residues: Peptidyl-tRNA hydrolase (186 aa).

Tyr14 lines the tRNA pocket. His19 (proton acceptor) is an active-site residue. Positions 64, 66, and 112 each coordinate tRNA.

It belongs to the PTH family. As to quaternary structure, monomer.

It is found in the cytoplasm. It carries out the reaction an N-acyl-L-alpha-aminoacyl-tRNA + H2O = an N-acyl-L-amino acid + a tRNA + H(+). Functionally, hydrolyzes ribosome-free peptidyl-tRNAs (with 1 or more amino acids incorporated), which drop off the ribosome during protein synthesis, or as a result of ribosome stalling. In terms of biological role, catalyzes the release of premature peptidyl moieties from peptidyl-tRNA molecules trapped in stalled 50S ribosomal subunits, and thus maintains levels of free tRNAs and 50S ribosomes. This Anaplasma marginale (strain St. Maries) protein is Peptidyl-tRNA hydrolase.